A 633-amino-acid polypeptide reads, in one-letter code: Threonine--tRNA ligase (633 aa).

Residues M1 to T61 enclose the TGS domain. The catalytic stretch occupies residues D242–P533. The Zn(2+) site is built by C333, H384, and H510.

Belongs to the class-II aminoacyl-tRNA synthetase family. As to quaternary structure, homodimer. The cofactor is Zn(2+).

The protein resides in the cytoplasm. The enzyme catalyses tRNA(Thr) + L-threonine + ATP = L-threonyl-tRNA(Thr) + AMP + diphosphate + H(+). Functionally, catalyzes the attachment of threonine to tRNA(Thr) in a two-step reaction: L-threonine is first activated by ATP to form Thr-AMP and then transferred to the acceptor end of tRNA(Thr). Also edits incorrectly charged L-seryl-tRNA(Thr). This is Threonine--tRNA ligase from Ehrlichia canis (strain Jake).